Here is a 944-residue protein sequence, read N- to C-terminus: Serine/threonine-protein kinase ATG1 (944 aa).

The 304-residue stretch at 24-327 (FNIGSEIGKG…FENFFTHQVV (304 aa)) folds into the Protein kinase domain. ATP contacts are provided by residues 30–38 (IGKGSFAQV) and Lys-53. Catalysis depends on Asp-167, which acts as the Proton acceptor. A disordered region spans residues 344–423 (RQESRDPRSA…NSPREGGEGL (80 aa)). Residues 356–367 (SGSPSLSSRSPR) are compositionally biased toward low complexity. Residues 428–431 (PVAQ) carry the LIR motif. Disordered regions lie at residues 443 to 475 (YDSV…PITE), 512 to 572 (LGDA…GSAS), 777 to 801 (QLPD…AGSP), 860 to 895 (EGSG…EEAH), and 925 to 944 (AVRR…HASS). 2 stretches are compositionally biased toward polar residues: residues 447–459 (TGRN…TSLL) and 516–549 (SQRS…NALA). The span at 563 to 572 (SLSASPGSAS) shows a compositional bias: low complexity. Over residues 785 to 801 (HPSNHGTESIASSAGSP) the composition is skewed to polar residues. Over residues 865-881 (ETRRLSTGKEAEREAVK) the composition is skewed to basic and acidic residues. The segment at 924–930 (QAVRRRS) is required for Cvt trafficking.

It belongs to the protein kinase superfamily. Ser/Thr protein kinase family. APG1/unc-51/ULK1 subfamily. Homodimer. Dimerization requires the presence of ATG13. Forms a ternary complex with ATG13 and ATG17.

It is found in the cytoplasm. The protein localises to the preautophagosomal structure membrane. It carries out the reaction L-seryl-[protein] + ATP = O-phospho-L-seryl-[protein] + ADP + H(+). It catalyses the reaction L-threonyl-[protein] + ATP = O-phospho-L-threonyl-[protein] + ADP + H(+). Its function is as follows. Serine/threonine protein kinase involved in the cytoplasm to vacuole transport (Cvt) and found to be essential in autophagy, where it is required for the formation of autophagosomes. Involved in the clearance of protein aggregates which cannot be efficiently cleared by the proteasome. Required for selective autophagic degradation of the nucleus (nucleophagy) as well as for mitophagy which contributes to regulate mitochondrial quantity and quality by eliminating the mitochondria to a basal level to fulfill cellular energy requirements and preventing excess ROS production. Also involved in endoplasmic reticulum-specific autophagic process, in selective removal of ER-associated degradation (ERAD) substrates. Plays a key role in ATG9 and ATG23 cycling through the pre-autophagosomal structure and is necessary to promote ATG18 binding to ATG9 through phosphorylation of ATG9. Catalyzes phosphorylation of ATG4, decreasing the interaction between ATG4 and ATG8 and impairing deconjugation of PE-conjugated forms of ATG8. Autophagy is required for proper vegetative growth, asexual/sexual reproduction, and full virulence. Autophagy is particularly involved in the biosynthesis of deoxynivalenol (DON), an important virulence determinant. The chain is Serine/threonine-protein kinase ATG1 from Gibberella zeae (strain ATCC MYA-4620 / CBS 123657 / FGSC 9075 / NRRL 31084 / PH-1) (Wheat head blight fungus).